The chain runs to 160 residues: MAKPKTPEEKNYKVIAENRRARREYAIEEDLEVGIVLEGSEVKSLREGGSNIAESYATVDDGELWLVNSYIAPYAQAKTWKHEERRRRKLLVSRRELSRLWNATQRQGMTLVPLVMYFNHRGLVKLKIGVAKGKKLADKRQTDAKRDWNRQKQRLLKQNL.

The protein belongs to the SmpB family.

The protein resides in the cytoplasm. Functionally, required for rescue of stalled ribosomes mediated by trans-translation. Binds to transfer-messenger RNA (tmRNA), required for stable association of tmRNA with ribosomes. tmRNA and SmpB together mimic tRNA shape, replacing the anticodon stem-loop with SmpB. tmRNA is encoded by the ssrA gene; the 2 termini fold to resemble tRNA(Ala) and it encodes a 'tag peptide', a short internal open reading frame. During trans-translation Ala-aminoacylated tmRNA acts like a tRNA, entering the A-site of stalled ribosomes, displacing the stalled mRNA. The ribosome then switches to translate the ORF on the tmRNA; the nascent peptide is terminated with the 'tag peptide' encoded by the tmRNA and targeted for degradation. The ribosome is freed to recommence translation, which seems to be the essential function of trans-translation. This is SsrA-binding protein from Dinoroseobacter shibae (strain DSM 16493 / NCIMB 14021 / DFL 12).